The primary structure comprises 284 residues: MTEIIDGKALAQKLQLHLANKVEQMKEKHGLVPGLVVILVGDNPASQVYVRNKERSAIKAGFKSETICLSDSISEEELIEIIEGYNQDPSFHGILVQLPLPAHINDKKIILAIDPHKDVDGFHPMNTGHLWSGRSMMVPCTPAGIMEMLSAYHVDLEGKHAVIIGRSNIVGKPMAQLLLEKNATVTLTHSRTKHLSEVTRCADVLIVAIGQGNFVTEEFVKEGAVVIDVGMNRDKNGKLIGDVNFDHVAQKASLITPVPGGVGPMTITMLLEQTYQAALRSVTK.

NADP(+)-binding positions include 165 to 167 (GRS) and serine 190.

This sequence belongs to the tetrahydrofolate dehydrogenase/cyclohydrolase family. As to quaternary structure, homodimer.

It catalyses the reaction (6R)-5,10-methylene-5,6,7,8-tetrahydrofolate + NADP(+) = (6R)-5,10-methenyltetrahydrofolate + NADPH. The enzyme catalyses (6R)-5,10-methenyltetrahydrofolate + H2O = (6R)-10-formyltetrahydrofolate + H(+). The protein operates within one-carbon metabolism; tetrahydrofolate interconversion. In terms of biological role, catalyzes the oxidation of 5,10-methylenetetrahydrofolate to 5,10-methenyltetrahydrofolate and then the hydrolysis of 5,10-methenyltetrahydrofolate to 10-formyltetrahydrofolate. The chain is Bifunctional protein FolD from Streptococcus mutans serotype c (strain ATCC 700610 / UA159).